Reading from the N-terminus, the 171-residue chain is uncharacterized protein (171 aa).

Disordered regions lie at residues 27–53 (DCPG…KMVL) and 82–108 (GHLE…PSSS). Residues 32 to 50 (GNNNREPSISTRGRTSSSK) show a composition bias toward polar residues.

This is an uncharacterized protein from Homo sapiens (Human).